The primary structure comprises 723 residues: Fatty acid oxidation complex subunit alpha (723 aa).

Residues 1-189 are enoyl-CoA hydratase/isomerase; it reads MIYQAETLQV…KIGLLDAVVD (189 aa). Asp-296 is a binding site for substrate. Residues 311–723 form a 3-hydroxyacyl-CoA dehydrogenase region; that stretch reads NKETQRAAVL…FYGAQQQGSI (413 aa). Residues Met-325, Asp-344, 401–403, Lys-408, and Ser-430 each bind NAD(+); that span reads VVE. The active-site For 3-hydroxyacyl-CoA dehydrogenase activity is the His-451. Asn-454 contributes to the NAD(+) binding site. Substrate contacts are provided by Asn-501 and Tyr-661.

In the N-terminal section; belongs to the enoyl-CoA hydratase/isomerase family. This sequence in the C-terminal section; belongs to the 3-hydroxyacyl-CoA dehydrogenase family. Heterotetramer of two alpha chains (FadB) and two beta chains (FadA).

The catalysed reaction is a (3S)-3-hydroxyacyl-CoA + NAD(+) = a 3-oxoacyl-CoA + NADH + H(+). The enzyme catalyses a (3S)-3-hydroxyacyl-CoA = a (2E)-enoyl-CoA + H2O. It carries out the reaction a 4-saturated-(3S)-3-hydroxyacyl-CoA = a (3E)-enoyl-CoA + H2O. It catalyses the reaction (3S)-3-hydroxybutanoyl-CoA = (3R)-3-hydroxybutanoyl-CoA. The catalysed reaction is a (3Z)-enoyl-CoA = a 4-saturated (2E)-enoyl-CoA. The enzyme catalyses a (3E)-enoyl-CoA = a 4-saturated (2E)-enoyl-CoA. Its pathway is lipid metabolism; fatty acid beta-oxidation. In terms of biological role, involved in the aerobic and anaerobic degradation of long-chain fatty acids via beta-oxidation cycle. Catalyzes the formation of 3-oxoacyl-CoA from enoyl-CoA via L-3-hydroxyacyl-CoA. It can also use D-3-hydroxyacyl-CoA and cis-3-enoyl-CoA as substrate. The polypeptide is Fatty acid oxidation complex subunit alpha (Vibrio vulnificus (strain YJ016)).